The primary structure comprises 284 residues: MQIINDPAEMQKIAEKLRLQHQYIGVVMTMGALHEGHLSLVKLAKAHAGTVIMTIFVNPTQFGPNEDFYRYPRPFEQDAALARSAGVDYLFAPSTEAMYPDGYSTSIDPGPIATRFEGASRPGHFGGMVTVVVKLLGITRPHLAVFGEKDAQQLAIIRRVVTDLNIGTTILGAPIVRESDGLATSSRNIYLSSNERQQATVLYRAIRYAKMEIDKDRTDLEAIAGEAEALVRSEPDAEPDYLCFVDDATFEPVTQAVTGKAYRLIMAVRIGSTRLIDNWRFDYQ.

Met30–His37 provides a ligand contact to ATP. The Proton donor role is filled by His37. Gln61 contacts (R)-pantoate. Gln61 provides a ligand contact to beta-alanine. An ATP-binding site is contributed by Gly147–Asp150. Gln153 contributes to the (R)-pantoate binding site. Residues Val176 and Thr184–Arg187 each bind ATP.

This sequence belongs to the pantothenate synthetase family. Homodimer.

Its subcellular location is the cytoplasm. The enzyme catalyses (R)-pantoate + beta-alanine + ATP = (R)-pantothenate + AMP + diphosphate + H(+). It participates in cofactor biosynthesis; (R)-pantothenate biosynthesis; (R)-pantothenate from (R)-pantoate and beta-alanine: step 1/1. In terms of biological role, catalyzes the condensation of pantoate with beta-alanine in an ATP-dependent reaction via a pantoyl-adenylate intermediate. This Chlorobaculum tepidum (strain ATCC 49652 / DSM 12025 / NBRC 103806 / TLS) (Chlorobium tepidum) protein is Pantothenate synthetase.